The sequence spans 305 residues: UDP-3-O-acyl-N-acetylglucosamine deacetylase (305 aa).

His-78, His-237, and Asp-241 together coordinate Zn(2+). His-264 serves as the catalytic Proton donor.

Belongs to the LpxC family. Zn(2+) is required as a cofactor.

It catalyses the reaction a UDP-3-O-[(3R)-3-hydroxyacyl]-N-acetyl-alpha-D-glucosamine + H2O = a UDP-3-O-[(3R)-3-hydroxyacyl]-alpha-D-glucosamine + acetate. The protein operates within glycolipid biosynthesis; lipid IV(A) biosynthesis; lipid IV(A) from (3R)-3-hydroxytetradecanoyl-[acyl-carrier-protein] and UDP-N-acetyl-alpha-D-glucosamine: step 2/6. Its function is as follows. Catalyzes the hydrolysis of UDP-3-O-myristoyl-N-acetylglucosamine to form UDP-3-O-myristoylglucosamine and acetate, the committed step in lipid A biosynthesis. In Burkholderia multivorans (strain ATCC 17616 / 249), this protein is UDP-3-O-acyl-N-acetylglucosamine deacetylase.